Reading from the N-terminus, the 184-residue chain is Ribosome-recycling factor (184 aa).

The protein belongs to the RRF family.

It is found in the cytoplasm. Responsible for the release of ribosomes from messenger RNA at the termination of protein biosynthesis. May increase the efficiency of translation by recycling ribosomes from one round of translation to another. The polypeptide is Ribosome-recycling factor (Desulfotalea psychrophila (strain LSv54 / DSM 12343)).